Reading from the N-terminus, the 399-residue chain is Homocysteine-responsive endoplasmic reticulum-resident ubiquitin-like domain member 2 protein (399 aa).

Residues 10-89 enclose the Ubiquitin-like domain; that stretch reads VTLVIKAPNQ…HMVHLVCASR (80 aa). Disordered stretches follow at residues 88–144 and 211–250; these read SRTP…SIRH and ASNQSPSNGENAQPVPRPVINSESPPPNPPRAPPNVAPEM. Positions 95–106 are enriched in polar residues; the sequence is PKASTSNKSMGT. Over residues 107 to 124 the composition is skewed to low complexity; the sequence is ASISRSSSEHSGSASPAS. The span at 211–221 shows a compositional bias: polar residues; that stretch reads ASNQSPSNGEN. Residues 234-246 show a composition bias toward pro residues; it reads SPPPNPPRAPPNV. Residues 299-319 form a helical membrane-spanning segment; sequence FVMVMGAMILVYMHQAGWFPL.

Its subcellular location is the membrane. Could be involved in the unfolded protein response (UPR) pathway. The sequence is that of Homocysteine-responsive endoplasmic reticulum-resident ubiquitin-like domain member 2 protein (herpud2) from Xenopus tropicalis (Western clawed frog).